The sequence spans 590 residues: Aspartate--tRNA(Asp/Asn) ligase (590 aa).

E169 serves as a coordination point for L-aspartate. Positions 193 to 196 (QLFK) are aspartate. R215 contributes to the L-aspartate binding site. ATP contacts are provided by residues 215 to 217 (RDE) and Q224. H447 is an L-aspartate binding site. An ATP-binding site is contributed by E479. An L-aspartate-binding site is contributed by R486. ATP is bound at residue 531–534 (GWDR). Residues 556–590 (GGFDPLTAAPAPITPEQRKEAGVDARPQQDLPPQS) form a disordered region.

This sequence belongs to the class-II aminoacyl-tRNA synthetase family. Type 1 subfamily. As to quaternary structure, homodimer.

Its subcellular location is the cytoplasm. It catalyses the reaction tRNA(Asx) + L-aspartate + ATP = L-aspartyl-tRNA(Asx) + AMP + diphosphate. Aspartyl-tRNA synthetase with relaxed tRNA specificity since it is able to aspartylate not only its cognate tRNA(Asp) but also tRNA(Asn). Reaction proceeds in two steps: L-aspartate is first activated by ATP to form Asp-AMP and then transferred to the acceptor end of tRNA(Asp/Asn). The protein is Aspartate--tRNA(Asp/Asn) ligase of Nocardioides sp. (strain ATCC BAA-499 / JS614).